The sequence spans 166 residues: 2-C-methyl-D-erythritol 2,4-cyclodiphosphate synthase (166 aa).

A divalent metal cation contacts are provided by aspartate 15 and histidine 17. Residues 15–17 (DVH) and 43–44 (HS) contribute to the 4-CDP-2-C-methyl-D-erythritol 2-phosphate site. Histidine 51 is a binding site for a divalent metal cation. 4-CDP-2-C-methyl-D-erythritol 2-phosphate contacts are provided by residues 65–67 (DIG), 141–144 (TTNE), and arginine 151.

Belongs to the IspF family. In terms of assembly, homotrimer. The cofactor is a divalent metal cation.

The enzyme catalyses 4-CDP-2-C-methyl-D-erythritol 2-phosphate = 2-C-methyl-D-erythritol 2,4-cyclic diphosphate + CMP. It functions in the pathway isoprenoid biosynthesis; isopentenyl diphosphate biosynthesis via DXP pathway; isopentenyl diphosphate from 1-deoxy-D-xylulose 5-phosphate: step 4/6. In terms of biological role, involved in the biosynthesis of isopentenyl diphosphate (IPP) and dimethylallyl diphosphate (DMAPP), two major building blocks of isoprenoid compounds. Catalyzes the conversion of 4-diphosphocytidyl-2-C-methyl-D-erythritol 2-phosphate (CDP-ME2P) to 2-C-methyl-D-erythritol 2,4-cyclodiphosphate (ME-CPP) with a corresponding release of cytidine 5-monophosphate (CMP). The protein is 2-C-methyl-D-erythritol 2,4-cyclodiphosphate synthase of Synechococcus sp. (strain CC9311).